The sequence spans 138 residues: ATP synthase epsilon chain (138 aa).

It belongs to the ATPase epsilon chain family. F-type ATPases have 2 components, CF(1) - the catalytic core - and CF(0) - the membrane proton channel. CF(1) has five subunits: alpha(3), beta(3), gamma(1), delta(1), epsilon(1). CF(0) has three main subunits: a, b and c.

It is found in the cell inner membrane. Functionally, produces ATP from ADP in the presence of a proton gradient across the membrane. This Citrifermentans bemidjiense (strain ATCC BAA-1014 / DSM 16622 / JCM 12645 / Bem) (Geobacter bemidjiensis) protein is ATP synthase epsilon chain.